Consider the following 519-residue polypeptide: Ribonuclease Y 1 (519 aa).

A helical transmembrane segment spans residues 3–23 (VPIVILAIIAIVVGVVGGYYL). A compositionally biased stretch (basic and acidic residues) spans 92–120 (QREETLDRKDNSLEKRENSLNRRDKKLSA). The disordered stretch occupies residues 92–124 (QREETLDRKDNSLEKRENSLNRRDKKLSAEEQN). Residues 209 to 272 (TITVVTLPND…EVAKIALEKL (64 aa)) enclose the KH domain. One can recognise an HD domain in the interval 335 to 428 (ALAHSIEVAK…VSTADIISAT (94 aa)).

It belongs to the RNase Y family.

It localises to the cell membrane. In terms of biological role, endoribonuclease that initiates mRNA decay. The protein is Ribonuclease Y 1 of Levilactobacillus brevis (strain ATCC 367 / BCRC 12310 / CIP 105137 / JCM 1170 / LMG 11437 / NCIMB 947 / NCTC 947) (Lactobacillus brevis).